The primary structure comprises 509 residues: MTLQGKPYRLSDLIKQTGVRLTDCSNQFSDRFVSGITQIAQSVERDDIFVAFQGKTRHGVEFLDQVQSCAAVLTDNKGRHIMQSDCLPTRSTPILVTDSPRSDLIVLAKRVYPIDDIRIFGITGTNGKTSTMHIAAKLLEMMGISCGISTTIGSSASESDSCLTTPELCQLYARIFTAKQARADFFALEASSHAINRGRLGDIVLEVAAFTNLTPEHMEEHKNMEAYYQAKKALFLNKRSNSAVINIDTPYGIRLFKETGCSASVISENTKYGLDHKLFWQASVRRVGLSFGFTLISPSGYRVESSISLLGKAFALNTCMAIVILCNLGIDIERIDSVLRKAGGLKMVLPGRMEVFQTGNSPRVIVDHGHTVDAVETALVAAKSITRGRLITIINADGQRDPSKRKHLGQLCGAYSDKLFITDGHSRFENPAEIRRMILDGVEGPRKQVEQIPSMTQAVLAAIDIAKSDDTVLCSGFGDDPYLDVLGKKIPYSLRDEVRRGLERFAQGT.

ATP is bound at residue 124–130; it reads GTNGKTS. UDP-N-acetyl-alpha-D-muramoyl-L-alanyl-D-glutamate contacts are provided by residues 164 to 165, Ser-191, and Arg-199; that span reads TT. Lys-231 bears the N6-carboxylysine mark.

It belongs to the MurCDEF family. MurE subfamily. Carboxylation is probably crucial for Mg(2+) binding and, consequently, for the gamma-phosphate positioning of ATP.

It localises to the cytoplasm. Its pathway is cell wall biogenesis; peptidoglycan biosynthesis. Its function is as follows. Catalyzes the addition of an amino acid to the nucleotide precursor UDP-N-acetylmuramoyl-L-alanyl-D-glutamate (UMAG) in the biosynthesis of bacterial cell-wall peptidoglycan. The protein is UDP-N-acetylmuramyl-tripeptide synthetase of Tropheryma whipplei (strain TW08/27) (Whipple's bacillus).